A 291-amino-acid chain; its full sequence is Ribosomal large subunit pseudouridine synthase B (291 aa).

The region spanning 3-75 (EKLQKVLARA…ICRVLAYYKP (73 aa)) is the S4 RNA-binding domain. Aspartate 110 serves as the catalytic Nucleophile. Positions 256-291 (VEKDRRRMKANQIRRAVKRHSQVSGGRRSGGRNNNG) are disordered.

Belongs to the pseudouridine synthase RsuA family.

The enzyme catalyses uridine(2605) in 23S rRNA = pseudouridine(2605) in 23S rRNA. Its function is as follows. Responsible for synthesis of pseudouridine from uracil-2605 in 23S ribosomal RNA. This chain is Ribosomal large subunit pseudouridine synthase B (rluB), found in Escherichia coli (strain K12).